The primary structure comprises 130 residues: Cystatin domain-containing protein 1 (130 aa).

The signal sequence occupies residues M1–K23. The Cystatin domain maps to A37–W116. Cystine bridges form between C84–C94 and C107–C127.

It belongs to the cystatin family.

Its subcellular location is the secreted. Functionally, may play a specialized role in spermatogenesis. In Rattus norvegicus (Rat), this protein is Cystatin domain-containing protein 1.